A 203-amino-acid polypeptide reads, in one-letter code: A-type ATP synthase subunit E (203 aa).

It belongs to the V-ATPase E subunit family. As to quaternary structure, has multiple subunits with at least A(3), B(3), C, D, E, F, H, I and proteolipid K(x).

The protein localises to the cell membrane. In terms of biological role, component of the A-type ATP synthase that produces ATP from ADP in the presence of a proton gradient across the membrane. The protein is A-type ATP synthase subunit E of Methanococcus aeolicus (strain ATCC BAA-1280 / DSM 17508 / OCM 812 / Nankai-3).